The primary structure comprises 763 residues: U3 small nucleolar RNA-associated protein 25 homolog (763 aa).

The interval 1–164 (MGKRRSRGRS…SQKSSEEFTD (164 aa)) is disordered. 2 promotes p53/TP53 degradation regions span residues 1–190 (MGKR…SQRT) and 580–642 (VQLP…KKEE). Ser10 carries the phosphoserine modification. Residues 25-43 (RDFGEEHPFYDRVSKKEVK) are compositionally biased toward basic and acidic residues. 3 positions are modified to phosphoserine: Ser52, Ser60, and Ser64. The span at 54 to 70 (DSSHSESESESEQEHVS) shows a compositional bias: basic and acidic residues. Acidic residues predominate over residues 84–119 (EEEEEEEEEEEEEEEDKEEVDDSAVGDSEMNGEDGG). Residues 643–704 (LNFTHICEYT…YELPTYAHFY (62 aa)) form a represses p53/TP53 degradation region.

It belongs to the UTP25 family. In terms of assembly, interacts with CAPN3; the interaction is required for CAPN3 translocation to the nucleolus. Post-translationally, phosphorylated. Phosphorylation is required to promote p53/TP53 degradation in the nucleolus which promotes cell cycle progression and liver development.

It localises to the nucleus. Its subcellular location is the nucleolus. Its function is as follows. Component of the ribosomal small subunit processome for the biogenesis of ribosomes, functions in pre-ribosomal RNA (pre-rRNA) processing. Essential for embryonic development in part through the regulation of p53 pathway. Controls the expansion growth of digestive organs and liver. Also involved in the sympathetic neuronal development. Mediates, with CAPN3, the proteasome-independent degradation of p53/TP53. In Rattus norvegicus (Rat), this protein is U3 small nucleolar RNA-associated protein 25 homolog.